A 112-amino-acid polypeptide reads, in one-letter code: Putative pterin-4-alpha-carbinolamine dehydratase (112 aa).

This sequence belongs to the pterin-4-alpha-carbinolamine dehydratase family.

The catalysed reaction is (4aS,6R)-4a-hydroxy-L-erythro-5,6,7,8-tetrahydrobiopterin = (6R)-L-erythro-6,7-dihydrobiopterin + H2O. This is Putative pterin-4-alpha-carbinolamine dehydratase from Shewanella piezotolerans (strain WP3 / JCM 13877).